The sequence spans 455 residues: Putative O-acetyltransferase SAT14 (455 aa).

The protein belongs to the lysine N-acyltransferase MbtK family.

It participates in mycotoxin biosynthesis. Putative O-acetyltransferase; part of the satratoxin SC2 cluster involved in the biosynthesis of satratoxins, trichothecene mycotoxins that are associated with human food poisonings. Satratoxins are suggested to be made by products of multiple gene clusters (SC1, SC2 and SC3) that encode 21 proteins in all, including polyketide synthases, acetyltransferases, and other enzymes expected to modify the trichothecene skeleton. SC1 encodes 10 proteins, SAT1 to SAT10. The largest are SAT8, which encodes a putative polyketide synthase (PKS) with a conventional non-reducing architecture, and SAT10, a putative protein containing four ankyrin repeats and thus may be involved in protein scaffolding. The putative short-chain reductase SAT3 may assist the PKS in some capacity. SAT6 contains a secretory lipase domain and acts probably as a trichothecene esterase. SAT5 encodes a putative acetyltransferase, and so, with SAT6, may affect endogenous protection from toxicity. The probable transcription factor SAT9 may regulate the expression of the SC1 cluster. SC2 encodes proteins SAT11 to SAT16, the largest of which encodes the putative reducing PKS SAT13. SAT11 is a cytochrome P450 monooxygenase, while SAT14 and SAT16 are probable acetyltransferases. The SC2 cluster may be regulated by the transcription factor SAT15. SC3 is a small cluster that encodes 5 proteins, SAT17 to SAT21. SAT21 is a putative MFS-type transporter which may have a role in exporting secondary metabolites. The four other proteins putatively encoded in SC3 include the taurine hydroxylase-like protein SAT17, the O-methyltransferase SAT18, the acetyltransferase SAT19, and the Cys6-type zinc finger SAT20, the latter being probably involved in regulation of SC3 expression. This chain is Putative O-acetyltransferase SAT14, found in Stachybotrys chartarum (strain CBS 109288 / IBT 7711) (Toxic black mold).